Consider the following 276-residue polypeptide: Acyl-[acyl-carrier-protein]--UDP-N-acetylglucosamine O-acyltransferase (276 aa).

This sequence belongs to the transferase hexapeptide repeat family. LpxA subfamily. As to quaternary structure, homotrimer.

Its subcellular location is the cytoplasm. The catalysed reaction is a (3R)-hydroxyacyl-[ACP] + UDP-N-acetyl-alpha-D-glucosamine = a UDP-3-O-[(3R)-3-hydroxyacyl]-N-acetyl-alpha-D-glucosamine + holo-[ACP]. It participates in glycolipid biosynthesis; lipid IV(A) biosynthesis; lipid IV(A) from (3R)-3-hydroxytetradecanoyl-[acyl-carrier-protein] and UDP-N-acetyl-alpha-D-glucosamine: step 1/6. Functionally, involved in the biosynthesis of lipid A, a phosphorylated glycolipid that anchors the lipopolysaccharide to the outer membrane of the cell. The sequence is that of Acyl-[acyl-carrier-protein]--UDP-N-acetylglucosamine O-acyltransferase from Gloeothece citriformis (strain PCC 7424) (Cyanothece sp. (strain PCC 7424)).